Consider the following 467-residue polypeptide: 3-isopropylmalate dehydratase large subunit (467 aa).

[4Fe-4S] cluster-binding residues include cysteine 347, cysteine 407, and cysteine 410.

Belongs to the aconitase/IPM isomerase family. LeuC type 1 subfamily. In terms of assembly, heterodimer of LeuC and LeuD. Requires [4Fe-4S] cluster as cofactor.

The enzyme catalyses (2R,3S)-3-isopropylmalate = (2S)-2-isopropylmalate. The protein operates within amino-acid biosynthesis; L-leucine biosynthesis; L-leucine from 3-methyl-2-oxobutanoate: step 2/4. In terms of biological role, catalyzes the isomerization between 2-isopropylmalate and 3-isopropylmalate, via the formation of 2-isopropylmaleate. The protein is 3-isopropylmalate dehydratase large subunit of Synechococcus sp. (strain JA-2-3B'a(2-13)) (Cyanobacteria bacterium Yellowstone B-Prime).